We begin with the raw amino-acid sequence, 533 residues long: Calcium-dependent protein kinase 8 (533 aa).

The interval 1 to 21 is disordered; that stretch reads MGNCCASPGSETGSKKGKPKI. G2 is lipidated: N-myristoyl glycine. The Protein kinase domain maps to 57-315; that stretch reads YDLGREVGRG…AAQVLEHSWI (259 aa). ATP-binding positions include 63–71 and K86; that span reads VGRGEFGIT. Residue D181 is the Proton acceptor of the active site. S221 is modified (phosphoserine). Positions 321 to 351 are autoinhibitory domain; the sequence is APNVSLGETVKARLKQFSVMNKLKKRALRVI. 4 EF-hand domains span residues 358–394, 395–430, 431–466, and 467–502; these read EEVA…GQQQ, IPDT…LKKM, ANDE…EVDT, and NSEE…GTDW. Residues D371, T375, K377, E382, D408, D410, D412, T414, E419, D444, N446, S448, Y450, E455, D480, D482, D484, and R486 each coordinate Ca(2+). At S488 the chain carries Phosphoserine. Ca(2+) is bound at residue E491. S526 carries the post-translational modification Phosphoserine.

The protein belongs to the protein kinase superfamily. Ser/Thr protein kinase family. CDPK subfamily.

It localises to the cell membrane. The enzyme catalyses L-seryl-[protein] + ATP = O-phospho-L-seryl-[protein] + ADP + H(+). The catalysed reaction is L-threonyl-[protein] + ATP = O-phospho-L-threonyl-[protein] + ADP + H(+). With respect to regulation, activated by calcium. Autophosphorylation may play an important role in the regulation of the kinase activity. Functionally, may play a role in signal transduction pathways that involve calcium as a second messenger. This Arabidopsis thaliana (Mouse-ear cress) protein is Calcium-dependent protein kinase 8 (CPK8).